The following is a 411-amino-acid chain: Epoxyqueuosine reductase (411 aa).

D171 functions as the Proton donor in the catalytic mechanism. Positions L213–T245 constitute a 4Fe-4S ferredoxin-type domain. The [4Fe-4S] cluster site is built by C225, C228, C231, C235, C251, C278, C281, and C285.

The protein belongs to the QueG family. As to quaternary structure, monomer. It depends on cob(II)alamin as a cofactor. Requires [4Fe-4S] cluster as cofactor.

It is found in the cytoplasm. It catalyses the reaction epoxyqueuosine(34) in tRNA + AH2 = queuosine(34) in tRNA + A + H2O. The protein operates within tRNA modification; tRNA-queuosine biosynthesis. Functionally, catalyzes the conversion of epoxyqueuosine (oQ) to queuosine (Q), which is a hypermodified base found in the wobble positions of tRNA(Asp), tRNA(Asn), tRNA(His) and tRNA(Tyr). The sequence is that of Epoxyqueuosine reductase from Yersinia pestis.